A 104-amino-acid chain; its full sequence is NADH-quinone oxidoreductase subunit K (104 aa).

Helical transmembrane passes span 4-24 (VPAS…LFGA), 31-51 (VIVL…FVAF), and 67-87 (LFTM…LIAL).

This sequence belongs to the complex I subunit 4L family. As to quaternary structure, NDH-1 is composed of 14 different subunits. Subunits NuoA, H, J, K, L, M, N constitute the membrane sector of the complex.

The protein resides in the cell membrane. It carries out the reaction a quinone + NADH + 5 H(+)(in) = a quinol + NAD(+) + 4 H(+)(out). Functionally, NDH-1 shuttles electrons from NADH, via FMN and iron-sulfur (Fe-S) centers, to quinones in the respiratory chain. The immediate electron acceptor for the enzyme in this species is believed to be a menaquinone. Couples the redox reaction to proton translocation (for every two electrons transferred, four hydrogen ions are translocated across the cytoplasmic membrane), and thus conserves the redox energy in a proton gradient. The sequence is that of NADH-quinone oxidoreductase subunit K from Bacillus anthracis (strain A0248).